We begin with the raw amino-acid sequence, 729 residues long: ATP-dependent DNA helicase Hel308 (729 aa).

ATP is bound by residues Gln28 and 46 to 53; that span reads IPTASGKT. Positions 33–199 constitute a Helicase ATP-binding domain; the sequence is EKGLLEGRNL…WLEAELVVSE (167 aa). Residues 144-147 carry the DEAH box motif; the sequence is DEVH. Residues 232–426 enclose the Helicase C-terminal domain; that stretch reads AVNLALDTLK…SKLGTENALR (195 aa). The segment at 706-729 is disordered; sequence SSGIIASEPPEKSPYSGQKTISDY. Positions 720-729 are enriched in polar residues; it reads YSGQKTISDY.

It belongs to the helicase family. Hel308 subfamily. In terms of assembly, monomer.

It catalyses the reaction Couples ATP hydrolysis with the unwinding of duplex DNA by translocating in the 3'-5' direction.. The catalysed reaction is ATP + H2O = ADP + phosphate + H(+). Its function is as follows. DNA-dependent ATPase and 3'-5' DNA helicase that may be involved in repair of stalled replication forks. The sequence is that of ATP-dependent DNA helicase Hel308 from Methanosarcina barkeri (strain Fusaro / DSM 804).